Consider the following 235-residue polypeptide: MAELDPFGAPAGAPGGPALGNGVAGAGEEDPAAAFLAQQESEIAGIENDEAFAILDGGAPGRATRRAAGGPDAVDGVMNGEYYQESNGPTDSYAAISEVDRLQSEPESIRKWREEQTERLEALDANSRKQEAEWKEKAIKELEEWYARQDEQLQKTKANNRVADEAFYKQPFADLIGYVAAEEAFVNDIDESSPGTEWERVARLCDFNPKSSKQAKDVSRMRSVLISLKQAPLVH.

Positions 1 to 32 (MAELDPFGAPAGAPGGPALGNGVAGAGEEDPA) are disordered. Over residues 13 to 25 (APGGPALGNGVAG) the composition is skewed to gly residues. The involved in binding clathrin heavy chain stretch occupies residues 99 to 161 (VDRLQSEPES…QLQKTKANNR (63 aa)). Phosphoserine is present on residues Ser104 and Ser193. The residue at position 210 (Lys210) is an N6-acetyllysine. Ser223 bears the Phosphoserine mark. Residue Lys229 is modified to N6-acetyllysine.

This sequence belongs to the clathrin light chain family. In terms of assembly, clathrin coats are formed from molecules containing 3 heavy chains and 3 light chains. Interacts with CALY; the interaction stimulates clathrin self-assembly and clathrin-mediated endocytosis. Interacts with CKAP5 and TACC3 forming the TACC3/ch-TOG/clathrin complex located at spindle inter-microtubules bridges; the complex implicates clathrin triskelions.

It is found in the cytoplasmic vesicle membrane. The protein resides in the membrane. The protein localises to the coated pit. It localises to the cytoplasm. Its subcellular location is the cytoskeleton. It is found in the spindle. Its function is as follows. Clathrin is the major protein of the polyhedral coat of coated pits and vesicles. Acts as a component of the TACC3/ch-TOG/clathrin complex proposed to contribute to stabilization of kinetochore fibers of the mitotic spindle by acting as inter-microtubule bridge. This chain is Clathrin light chain A (Clta), found in Mus musculus (Mouse).